The chain runs to 53 residues: Rubredoxin-1 (53 aa).

A Rubredoxin-like domain is found at 1-53; it reads MEKFVCDVCGYIYDPVVGDPDNGVAPGTKFKDIPDTWVCPLCKLDKTHFSKVE. Positions 6, 9, 39, and 42 each coordinate Fe cation.

This sequence belongs to the rubredoxin family. The cofactor is Fe(3+).

Functionally, rubredoxin is a small nonheme, iron protein lacking acid-labile sulfide. Its single Fe, chelated to 4 Cys, functions as an electron acceptor and may also stabilize the conformation of the molecule. This is Rubredoxin-1 (rubR1) from Clostridium perfringens (strain 13 / Type A).